The chain runs to 101 residues: Small integral membrane protein 19 (101 aa).

The helical transmembrane segment at Ala25–Ala43 threads the bilayer.

Belongs to the SMIM19 family.

It is found in the membrane. The sequence is that of Small integral membrane protein 19 (smim19) from Xenopus tropicalis (Western clawed frog).